Reading from the N-terminus, the 280-residue chain is Ribose-phosphate pyrophosphokinase (280 aa).

Residues 32-34 (DGE) and 89-90 (RQ) contribute to the ATP site. Positions 122 and 160 each coordinate Mg(2+). The active site involves lysine 183. D-ribose 5-phosphate contacts are provided by residues arginine 185, aspartate 209, and 213–217 (STGGT).

The protein belongs to the ribose-phosphate pyrophosphokinase family. Class III (archaeal) subfamily. Mg(2+) is required as a cofactor.

It is found in the cytoplasm. The enzyme catalyses D-ribose 5-phosphate + ATP = 5-phospho-alpha-D-ribose 1-diphosphate + AMP + H(+). It functions in the pathway metabolic intermediate biosynthesis; 5-phospho-alpha-D-ribose 1-diphosphate biosynthesis; 5-phospho-alpha-D-ribose 1-diphosphate from D-ribose 5-phosphate (route I): step 1/1. Its activity is regulated as follows. Activated by Co(2+) and Ni(2+) ions, however Mg(2+) ion shows almost no significant effect on the activity. Equally inhibited by ADP, CTP and GTP, while dTTP and UTP are less inhibitory. Involved in the biosynthesis of the central metabolite phospho-alpha-D-ribosyl-1-pyrophosphate (PRPP) via the transfer of pyrophosphoryl group from ATP to 1-hydroxyl of ribose-5-phosphate (Rib-5-P). It can also use CTP and GTP as substrates in addition to ATP. The chain is Ribose-phosphate pyrophosphokinase from Thermococcus kodakarensis (strain ATCC BAA-918 / JCM 12380 / KOD1) (Pyrococcus kodakaraensis (strain KOD1)).